Reading from the N-terminus, the 170-residue chain is Adenine phosphoribosyltransferase (170 aa).

Belongs to the purine/pyrimidine phosphoribosyltransferase family. As to quaternary structure, homodimer.

Its subcellular location is the cytoplasm. It carries out the reaction AMP + diphosphate = 5-phospho-alpha-D-ribose 1-diphosphate + adenine. The protein operates within purine metabolism; AMP biosynthesis via salvage pathway; AMP from adenine: step 1/1. In terms of biological role, catalyzes a salvage reaction resulting in the formation of AMP, that is energically less costly than de novo synthesis. This is Adenine phosphoribosyltransferase from Lactococcus lactis subsp. lactis (strain IL1403) (Streptococcus lactis).